The primary structure comprises 248 residues: 2,3-bisphosphoglycerate-dependent phosphoglycerate mutase (248 aa).

Residues Arg-8 to Asn-15, Thr-21 to Gly-22, Arg-60, Glu-87 to Tyr-90, Lys-98, Arg-114 to Arg-115, and Gly-183 to Asn-184 contribute to the substrate site. His-9 serves as the catalytic Tele-phosphohistidine intermediate. Glu-87 (proton donor/acceptor) is an active-site residue.

Belongs to the phosphoglycerate mutase family. BPG-dependent PGAM subfamily. Homodimer.

It catalyses the reaction (2R)-2-phosphoglycerate = (2R)-3-phosphoglycerate. It functions in the pathway carbohydrate degradation; glycolysis; pyruvate from D-glyceraldehyde 3-phosphate: step 3/5. Functionally, catalyzes the interconversion of 2-phosphoglycerate and 3-phosphoglycerate. The polypeptide is 2,3-bisphosphoglycerate-dependent phosphoglycerate mutase (Teredinibacter turnerae (strain ATCC 39867 / T7901)).